The chain runs to 294 residues: Elongation factor Ts (294 aa).

An involved in Mg(2+) ion dislocation from EF-Tu region spans residues 78-81 (TDFV).

It belongs to the EF-Ts family.

Its subcellular location is the cytoplasm. Functionally, associates with the EF-Tu.GDP complex and induces the exchange of GDP to GTP. It remains bound to the aminoacyl-tRNA.EF-Tu.GTP complex up to the GTP hydrolysis stage on the ribosome. The protein is Elongation factor Ts of Mycoplasma mobile (strain ATCC 43663 / 163K / NCTC 11711) (Mesomycoplasma mobile).